The chain runs to 456 residues: tRNA modification GTPase MnmE (456 aa).

Residues Arg24, Glu81, and Lys120 each contribute to the (6S)-5-formyl-5,6,7,8-tetrahydrofolate site. Residues 216 to 379 (GMTVVIAGRP…LRDHLKACMG (164 aa)) form the TrmE-type G domain. A K(+)-binding site is contributed by Asn226. GTP contacts are provided by residues 226-231 (NAGKSS), 245-251 (TDIAGTT), 270-273 (DTAG), and 335-338 (NKAD). Position 230 (Ser230) interacts with Mg(2+). K(+) contacts are provided by Thr245, Ile247, and Thr250. Thr251 serves as a coordination point for Mg(2+). Residue Lys456 participates in (6S)-5-formyl-5,6,7,8-tetrahydrofolate binding.

It belongs to the TRAFAC class TrmE-Era-EngA-EngB-Septin-like GTPase superfamily. TrmE GTPase family. As to quaternary structure, homodimer. Heterotetramer of two MnmE and two MnmG subunits. The cofactor is K(+).

The protein resides in the cytoplasm. In terms of biological role, exhibits a very high intrinsic GTPase hydrolysis rate. Involved in the addition of a carboxymethylaminomethyl (cmnm) group at the wobble position (U34) of certain tRNAs, forming tRNA-cmnm(5)s(2)U34. The polypeptide is tRNA modification GTPase MnmE (Pseudomonas fluorescens (strain ATCC BAA-477 / NRRL B-23932 / Pf-5)).